The following is a 157-amino-acid chain: Peptide methionine sulfoxide reductase MsrA (157 aa).

C13 is a catalytic residue.

It belongs to the MsrA Met sulfoxide reductase family.

It carries out the reaction L-methionyl-[protein] + [thioredoxin]-disulfide + H2O = L-methionyl-(S)-S-oxide-[protein] + [thioredoxin]-dithiol. The enzyme catalyses [thioredoxin]-disulfide + L-methionine + H2O = L-methionine (S)-S-oxide + [thioredoxin]-dithiol. In terms of biological role, has an important function as a repair enzyme for proteins that have been inactivated by oxidation. Catalyzes the reversible oxidation-reduction of methionine sulfoxide in proteins to methionine. The polypeptide is Peptide methionine sulfoxide reductase MsrA (Methanococcus maripaludis (strain C5 / ATCC BAA-1333)).